Reading from the N-terminus, the 498-residue chain is ATP synthase subunit beta, chloroplastic (498 aa).

Residue 172-179 (GGAGVGKT) coordinates ATP.

The protein belongs to the ATPase alpha/beta chains family. F-type ATPases have 2 components, CF(1) - the catalytic core - and CF(0) - the membrane proton channel. CF(1) has five subunits: alpha(3), beta(3), gamma(1), delta(1), epsilon(1). CF(0) has four main subunits: a(1), b(1), b'(1) and c(9-12).

It localises to the plastid. Its subcellular location is the chloroplast thylakoid membrane. The enzyme catalyses ATP + H2O + 4 H(+)(in) = ADP + phosphate + 5 H(+)(out). In terms of biological role, produces ATP from ADP in the presence of a proton gradient across the membrane. The catalytic sites are hosted primarily by the beta subunits. In Liriodendron tulipifera (Tuliptree), this protein is ATP synthase subunit beta, chloroplastic.